A 270-amino-acid polypeptide reads, in one-letter code: tRNA pseudouridine synthase A (270 aa).

The Nucleophile role is filled by D52. Y110 is a binding site for substrate.

This sequence belongs to the tRNA pseudouridine synthase TruA family. Homodimer.

The catalysed reaction is uridine(38/39/40) in tRNA = pseudouridine(38/39/40) in tRNA. Its function is as follows. Formation of pseudouridine at positions 38, 39 and 40 in the anticodon stem and loop of transfer RNAs. The protein is tRNA pseudouridine synthase A of Paraburkholderia phytofirmans (strain DSM 17436 / LMG 22146 / PsJN) (Burkholderia phytofirmans).